The following is a 288-amino-acid chain: Shikimate dehydrogenase (NADP(+)) (288 aa).

Residues 18-20 and threonine 65 each bind shikimate; that span reads SRS. Residue lysine 69 is the Proton acceptor of the active site. Glutamate 81 lines the NADP(+) pocket. Positions 90 and 106 each coordinate shikimate. NADP(+) is bound by residues 131-135, 155-160, and methionine 223; these read GAGGA and NRTLAK. Residue tyrosine 225 coordinates shikimate. Glycine 246 lines the NADP(+) pocket.

This sequence belongs to the shikimate dehydrogenase family. As to quaternary structure, homodimer.

The catalysed reaction is shikimate + NADP(+) = 3-dehydroshikimate + NADPH + H(+). It participates in metabolic intermediate biosynthesis; chorismate biosynthesis; chorismate from D-erythrose 4-phosphate and phosphoenolpyruvate: step 4/7. Involved in the biosynthesis of the chorismate, which leads to the biosynthesis of aromatic amino acids. Catalyzes the reversible NADPH linked reduction of 3-dehydroshikimate (DHSA) to yield shikimate (SA). The protein is Shikimate dehydrogenase (NADP(+)) of Verminephrobacter eiseniae (strain EF01-2).